A 189-amino-acid chain; its full sequence is Segregation and condensation protein B (189 aa).

The protein belongs to the ScpB family. As to quaternary structure, homodimer. Homodimerization may be required to stabilize the binding of ScpA to the Smc head domains. Component of a cohesin-like complex composed of ScpA, ScpB and the Smc homodimer, in which ScpA and ScpB bind to the head domain of Smc. The presence of the three proteins is required for the association of the complex with DNA.

Its subcellular location is the cytoplasm. Functionally, participates in chromosomal partition during cell division. May act via the formation of a condensin-like complex containing Smc and ScpA that pull DNA away from mid-cell into both cell halves. The chain is Segregation and condensation protein B from Clostridium tetani (strain Massachusetts / E88).